We begin with the raw amino-acid sequence, 570 residues long: Glycine--tRNA ligase (570 aa).

Positions 99 and 165 each coordinate substrate. ATP-binding positions include 197–199, 207–212, 324–325, and 443–446; these read RNE, IRLREF, EC, and GIDR. Residue 212 to 216 coordinates substrate; it reads FTQAE. 439–443 serves as a coordination point for substrate; that stretch reads EPSFG.

The protein belongs to the class-II aminoacyl-tRNA synthetase family.

It is found in the cytoplasm. It catalyses the reaction tRNA(Gly) + glycine + ATP = glycyl-tRNA(Gly) + AMP + diphosphate. Catalyzes the attachment of glycine to tRNA(Gly). This chain is Glycine--tRNA ligase, found in Pyrococcus horikoshii (strain ATCC 700860 / DSM 12428 / JCM 9974 / NBRC 100139 / OT-3).